Consider the following 251-residue polypeptide: Retinoic acid early-inducible protein 1-epsilon (251 aa).

The first 28 residues, 1-28 (MAKAAVTKRHHFMIQKLLILLSYGYTNG), serve as a signal peptide directing secretion. C37 and C56 form a disulfide bridge. N-linked (GlcNAc...) asparagine glycosylation is found at N38, N70, N83, N141, and N154. Residues C88 and C188 are joined by a disulfide bond. Positions 196–228 (LKQSKEKPRSTSRSPSITQLTSTSPLPPPSHST) are disordered. The segment covering 209 to 219 (SPSITQLTSTS) has biased composition (low complexity). A lipid anchor (GPI-anchor amidated serine) is attached at S225. Positions 226–251 (HSTSKKGFISVGLIFISLLFAFAFAM) are cleaved as a propeptide — removed in mature form.

It belongs to the NKG2D ligand family. Glycosylated.

Its subcellular location is the cell membrane. Functionally, acts as a ligand for KLRK1. The polypeptide is Retinoic acid early-inducible protein 1-epsilon (Raet1e) (Mus musculus (Mouse)).